The sequence spans 234 residues: Sugar fermentation stimulation protein A (234 aa).

Residues 201–220 (LLSEAQNKGVEVLAYKAELS) constitute a DNA-binding region (H-T-H motif).

This sequence belongs to the SfsA family.

Its function is as follows. Binds to DNA non-specifically. Could be a regulatory factor involved in maltose metabolism. The sequence is that of Sugar fermentation stimulation protein A from Salmonella choleraesuis (strain SC-B67).